Here is a 288-residue protein sequence, read N- to C-terminus: Eukaryotic translation initiation factor 3 subunit F-2 (288 aa).

One can recognise an MPN domain in the interval 12-149; that stretch reads VLLHPLVLFQ…TRIFCAVATG (138 aa).

The protein belongs to the eIF-3 subunit F family. As to quaternary structure, component of the eukaryotic translation initiation factor 3 (eIF-3) complex. The eIF-3 complex interacts with pix.

It localises to the cytoplasm. Its function is as follows. Component of the eukaryotic translation initiation factor 3 (eIF-3) complex, which is involved in protein synthesis of a specialized repertoire of mRNAs and, together with other initiation factors, stimulates binding of mRNA and methionyl-tRNAi to the 40S ribosome. The eIF-3 complex specifically targets and initiates translation of a subset of mRNAs involved in cell proliferation. The polypeptide is Eukaryotic translation initiation factor 3 subunit F-2 (Drosophila persimilis (Fruit fly)).